A 186-amino-acid chain; its full sequence is Ribosome rescue factor SmrB (186 aa).

Residues Ile99 to Glu174 enclose the Smr domain.

The protein belongs to the SmrB family. Associates with collided ribosomes, but not with correctly translating polysomes.

Functionally, acts as a ribosome collision sensor. Detects stalled/collided disomes (pairs of ribosomes where the leading ribosome is stalled and a second ribosome has collided with it) and endonucleolytically cleaves mRNA at the 5' boundary of the stalled ribosome. Stalled/collided disomes form a new interface (primarily via the 30S subunits) that binds SmrB. Cleaved mRNA becomes available for tmRNA ligation, leading to ribosomal subunit dissociation and rescue of stalled ribosomes. The polypeptide is Ribosome rescue factor SmrB (Buchnera aphidicola subsp. Acyrthosiphon pisum (strain 5A)).